The chain runs to 188 residues: Acireductone dioxygenase (188 aa).

Residues histidine 97, histidine 99, glutamate 103, and histidine 141 each coordinate Fe(2+). Positions 97, 99, 103, and 141 each coordinate Ni(2+).

This sequence belongs to the acireductone dioxygenase (ARD) family. As to quaternary structure, monomer. Fe(2+) is required as a cofactor. It depends on Ni(2+) as a cofactor.

It carries out the reaction 1,2-dihydroxy-5-(methylsulfanyl)pent-1-en-3-one + O2 = 3-(methylsulfanyl)propanoate + CO + formate + 2 H(+). The enzyme catalyses 1,2-dihydroxy-5-(methylsulfanyl)pent-1-en-3-one + O2 = 4-methylsulfanyl-2-oxobutanoate + formate + 2 H(+). It participates in amino-acid biosynthesis; L-methionine biosynthesis via salvage pathway; L-methionine from S-methyl-5-thio-alpha-D-ribose 1-phosphate: step 5/6. Functionally, catalyzes 2 different reactions between oxygen and the acireductone 1,2-dihydroxy-3-keto-5-methylthiopentene (DHK-MTPene) depending upon the metal bound in the active site. Fe-containing acireductone dioxygenase (Fe-ARD) produces formate and 2-keto-4-methylthiobutyrate (KMTB), the alpha-ketoacid precursor of methionine in the methionine recycle pathway. Ni-containing acireductone dioxygenase (Ni-ARD) produces methylthiopropionate, carbon monoxide and formate, and does not lie on the methionine recycle pathway. The sequence is that of Acireductone dioxygenase from Gluconobacter oxydans (strain 621H) (Gluconobacter suboxydans).